Consider the following 380-residue polypeptide: Cytochrome b (380 aa).

A run of 4 helical transmembrane segments spans residues 34-54 (FGWL…FLAM), 78-99 (WLLR…YFHI), 114-134 (WNIG…GYVL), and 179-199 (FFTF…IHLL). 2 residues coordinate heme b: His84 and His98. The heme b site is built by His183 and His197. His202 is a binding site for a ubiquinone. 4 consecutive transmembrane segments (helical) span residues 227 to 247 (FKDL…STFA), 289 to 309 (LGGV…PIIH), 321 to 341 (AAKA…WIGG), and 348 to 368 (FISI…LIIP).

Belongs to the cytochrome b family. As to quaternary structure, the cytochrome bc1 complex contains 3 respiratory subunits (MT-CYB, CYC1 and UQCRFS1), 2 core proteins (UQCRC1 and UQCRC2) and probably 6 low-molecular weight proteins. Heme b is required as a cofactor.

It is found in the mitochondrion inner membrane. Component of the ubiquinol-cytochrome c reductase complex (complex III or cytochrome b-c1 complex) that is part of the mitochondrial respiratory chain. The b-c1 complex mediates electron transfer from ubiquinol to cytochrome c. Contributes to the generation of a proton gradient across the mitochondrial membrane that is then used for ATP synthesis. The polypeptide is Cytochrome b (mt-cyb) (Rana dybowskii (Dybovsky's frog)).